Reading from the N-terminus, the 741-residue chain is uncharacterized protein (741 aa).

5 consecutive transmembrane segments (helical) span residues 34–54, 76–96, 120–140, 156–176, and 187–207; these read WLLWVTAGLVLFLLALVLLII, LIIPFIALFATIITFQVFING, LAVLFIWITGTAFLSGLFVSL, LSVFFGVLLLSLLFSCVLIII, and LLLLLGVSLASFTTVILAFSI. Residues 404–423 show a composition bias toward basic and acidic residues; the sequence is EAEEKERQEKEEKEKAEKDN. Disordered stretches follow at residues 404–473 and 555–647; these read EAEE…FRPR and QKEL…ENAK. Positions 424-439 are enriched in polar residues; the sequence is GNGQDSNKVNSVSTEP. 2 stretches are compositionally biased toward basic and acidic residues: residues 445–465 and 555–573; these read SDADSKDNNDSSDSQGKDSSK and QKELTEKNKQKQDGKDQKS. The segment covering 623–643 has biased composition (acidic residues); that stretch reads DNTDESEDKQSEEEEKFDEEI. 2 helical membrane passes run 655-675 and 715-735; these read AFFNTASIWLSSPFLFFENGA and VIIAMVLVVTLGLLVGSFFAY.

To M.pneumoniae MPN_333.

It localises to the cell membrane. This is an uncharacterized protein from Mycoplasma pneumoniae (strain ATCC 29342 / M129 / Subtype 1) (Mycoplasmoides pneumoniae).